The primary structure comprises 428 residues: Acylglycerol kinase, mitochondrial (428 aa).

The segment at S18 to G34 is hydrophobic. The region spanning S61–Q202 is the DAGKc domain.

The protein belongs to the AGK family. As to quaternary structure, component of the TIM22 complex. It depends on Mg(2+) as a cofactor.

The protein resides in the mitochondrion inner membrane. Its subcellular location is the mitochondrion intermembrane space. The catalysed reaction is a monoacylglycerol + ATP = a monoacyl-sn-glycero-3-phosphate + ADP + H(+). The enzyme catalyses a 1,2-diacyl-sn-glycerol + ATP = a 1,2-diacyl-sn-glycero-3-phosphate + ADP + H(+). It carries out the reaction an N-acylsphing-4-enine + ATP = an N-acylsphing-4-enine 1-phosphate + ADP + H(+). It catalyses the reaction 1-(9Z-octadecenoyl)-sn-glycerol + ATP = 1-(9Z-octadecenoyl)-sn-glycero-3-phosphate + ADP + H(+). The catalysed reaction is 1,2-di-(9Z-octadecenoyl)-sn-glycerol + ATP = 1,2-di-(9Z-octadecenoyl)-sn-glycero-3-phosphate + ADP + H(+). The enzyme catalyses a 1-acyl-sn-glycerol + ATP = a 1-acyl-sn-glycero-3-phosphate + ADP + H(+). It carries out the reaction 1-hexadecanoyl-sn-glycerol + ATP = 1-hexadecanoyl-sn-glycero-3-phosphate + ADP + H(+). It catalyses the reaction a 2-acylglycerol + ATP = a 2-acyl-sn-glycerol 3-phosphate + ADP + H(+). The catalysed reaction is 2-(5Z,8Z,11Z,14Z-eicosatetraenoyl)-glycerol + ATP = 2-(5Z,8Z,11Z,14Z-eicosatetraenoyl)-sn-glycero-3-phosphate + ADP + H(+). The enzyme catalyses 1-(5Z,8Z,11Z,14Z-eicosatetraenoyl)-sn-glycerol + ATP = 1-(5Z,8Z,11Z,14Z-eicosatetraenoyl)-sn-glycero-3-phosphate + ADP + H(+). It carries out the reaction N-(hexanoyl)sphing-4-enine + ATP = N-hexanoylsphing-4-enine 1-phosphate + ADP + H(+). Its pathway is lipid metabolism; glycerolipid metabolism. In terms of biological role, lipid kinase that can phosphorylate both monoacylglycerol and diacylglycerol to form lysophosphatidic acid (LPA) and phosphatidic acid (PA), respectively. Phosphorylates ceramide but not sphingosine. Phosphorylates 1,2-dioleoylglycerol more rapidly than 2,3-dioleoylglycerol. Independently of its lipid kinase activity, acts as a component of the TIM22 complex. The TIM22 complex mediates the import and insertion of multi-pass transmembrane proteins into the mitochondrial inner membrane by forming a twin-pore translocase that uses the membrane potential as the external driving force. This chain is Acylglycerol kinase, mitochondrial, found in Xenopus laevis (African clawed frog).